The chain runs to 323 residues: uncharacterized protein (323 aa).

Catalysis depends on tyrosine 59, which acts as the Proton donor. 198–208 contributes to the NADP(+) binding site; that stretch reads SPLAQGLLGGK.

The protein belongs to the aldo/keto reductase family. Aldo/keto reductase 2 subfamily.

This is an uncharacterized protein from Mycobacterium tuberculosis (strain CDC 1551 / Oshkosh).